The following is a 181-amino-acid chain: Small ribosomal subunit protein bS16 (181 aa).

The interval 150 to 181 (KKAAEEAAKAAAEAPAEEAAPAEEAATEAAAE) is disordered. The segment covering 158 to 181 (KAAAEAPAEEAAPAEEAATEAAAE) has biased composition (low complexity).

It belongs to the bacterial ribosomal protein bS16 family.

The sequence is that of Small ribosomal subunit protein bS16 from Bacteroides fragilis (strain ATCC 25285 / DSM 2151 / CCUG 4856 / JCM 11019 / LMG 10263 / NCTC 9343 / Onslow / VPI 2553 / EN-2).